The chain runs to 162 residues: MTSGGKSKGVGSEPGVRVIAENRRARFDYTVDEKVEAGLALTGSEVKSLRDGIANLSDAYALPKGDELFLLNANIGSYKAASFFDHLPTRGRKLLMHRGEIDRWTAKVRERGYSIIPLVLYFRNGRAKVELGLCRGKTHEDRRHDIKERETKREMDRAMRRR.

A disordered region spans residues 140 to 162 (EDRRHDIKERETKREMDRAMRRR).

This sequence belongs to the SmpB family.

It is found in the cytoplasm. Its function is as follows. Required for rescue of stalled ribosomes mediated by trans-translation. Binds to transfer-messenger RNA (tmRNA), required for stable association of tmRNA with ribosomes. tmRNA and SmpB together mimic tRNA shape, replacing the anticodon stem-loop with SmpB. tmRNA is encoded by the ssrA gene; the 2 termini fold to resemble tRNA(Ala) and it encodes a 'tag peptide', a short internal open reading frame. During trans-translation Ala-aminoacylated tmRNA acts like a tRNA, entering the A-site of stalled ribosomes, displacing the stalled mRNA. The ribosome then switches to translate the ORF on the tmRNA; the nascent peptide is terminated with the 'tag peptide' encoded by the tmRNA and targeted for degradation. The ribosome is freed to recommence translation, which seems to be the essential function of trans-translation. The polypeptide is SsrA-binding protein (Myxococcus xanthus (strain DK1622)).